Here is a 38-residue protein sequence, read N- to C-terminus: CHH precursor-related peptide (38 aa).

The tract at residues 18–38 (GALEPSTPLGDLSGSLGHPVE) is disordered.

As to expression, produced by the medulla terminalis X-organ in the eyestalks and transported to the sinus gland where it is stored and released.

It localises to the secreted. The chain is CHH precursor-related peptide from Cancer pagurus (Rock crab).